Reading from the N-terminus, the 596-residue chain is Chaperonin 60 subunit beta 2, chloroplastic (596 aa).

The transit peptide at 1 to 50 (MASTFTATSSLGSLLAPNAIKLSSATSISSSSFGRRHNVCVRRSRPAIVC) directs the protein to the chloroplast. A phosphoserine mark is found at serine 97 and serine 474. A coiled-coil region spans residues 388–489 (TQEAVNKRVV…KDTLENDEEK (102 aa)).

The protein belongs to the chaperonin (HSP60) family. As to quaternary structure, part of the Cpn60 complex composed of 7 alpha and 7 beta subunits. Can also form a complex composed of 14 beta subunits only. Both complexes show ATPase activity. The Cpn60 complex interacts with the Cpn10 complex. Interacts with RAB during heat stress.

The protein resides in the plastid. Its subcellular location is the chloroplast stroma. Involved in protein assisted folding. The protein is Chaperonin 60 subunit beta 2, chloroplastic (CPN60B2) of Arabidopsis thaliana (Mouse-ear cress).